Reading from the N-terminus, the 900-residue chain is Translation initiation factor IF-2 (900 aa).

Disordered regions lie at residues 30–77 (GEFV…SLDK) and 89–291 (NGKA…YDSM). A compositionally biased stretch (low complexity) spans 89-112 (NGKATAAPAKAADSGGAAIVSPTT). The span at 113–129 (PAAPEPPTAVPPSPQAP) shows a compositional bias: pro residues. Residues 175-187 (PGTARPGVPRPGA) show a composition bias toward low complexity. A compositionally biased stretch (gly residues) spans 215–271 (GRPGAPGAGRSDAGGGNYRGGGVGAAPGTGFRGRPGGGGGGRPGQRGGAAGAFGRPG). The segment covering 275–284 (RRGRKSKRQK) has biased composition (basic residues). The tr-type G domain occupies 396-567 (VRPPVVTVMG…AVLLTADAAL (172 aa)). Residues 405–412 (GHVDHGKT) form a G1 region. GTP is bound at residue 405–412 (GHVDHGKT). Positions 430-434 (GITQH) are G2. The G3 stretch occupies residues 455–458 (DTPG). Residues 455-459 (DTPGH) and 509-512 (NKID) each bind GTP. Positions 509–512 (NKID) are G4. The tract at residues 545–547 (SAK) is G5.

The protein belongs to the TRAFAC class translation factor GTPase superfamily. Classic translation factor GTPase family. IF-2 subfamily.

It localises to the cytoplasm. Functionally, one of the essential components for the initiation of protein synthesis. Protects formylmethionyl-tRNA from spontaneous hydrolysis and promotes its binding to the 30S ribosomal subunits. Also involved in the hydrolysis of GTP during the formation of the 70S ribosomal complex. This is Translation initiation factor IF-2 from Mycobacterium bovis (strain BCG / Pasteur 1173P2).